The following is a 360-amino-acid chain: Photosystem II protein D1 (360 aa).

3 helical membrane passes run Y29–S46, H118–L133, and W142–A156. H118 provides a ligand contact to chlorophyll a. Y126 serves as a coordination point for pheophytin a. Residues D170 and E189 each coordinate [CaMn4O5] cluster. Residues F197–L218 form a helical membrane-spanning segment. H198 serves as a coordination point for chlorophyll a. A quinone contacts are provided by residues H215 and S264–F265. H215 contributes to the Fe cation binding site. H272 contributes to the Fe cation binding site. A helical membrane pass occupies residues F274–M288. [CaMn4O5] cluster-binding residues include H332, E333, D342, and A344. Residues A345 to A360 constitute a propeptide that is removed on maturation.

The protein belongs to the reaction center PufL/M/PsbA/D family. In terms of assembly, PSII is composed of 1 copy each of membrane proteins PsbA, PsbB, PsbC, PsbD, PsbE, PsbF, PsbH, PsbI, PsbJ, PsbK, PsbL, PsbM, PsbT, PsbX, PsbY, PsbZ, Psb30/Ycf12, at least 3 peripheral proteins of the oxygen-evolving complex and a large number of cofactors. It forms dimeric complexes. Requires The D1/D2 heterodimer binds P680, chlorophylls that are the primary electron donor of PSII, and subsequent electron acceptors. It shares a non-heme iron and each subunit binds pheophytin, quinone, additional chlorophylls, carotenoids and lipids. D1 provides most of the ligands for the Mn4-Ca-O5 cluster of the oxygen-evolving complex (OEC). There is also a Cl(-1) ion associated with D1 and D2, which is required for oxygen evolution. The PSII complex binds additional chlorophylls, carotenoids and specific lipids. as cofactor. In terms of processing, tyr-161 forms a radical intermediate that is referred to as redox-active TyrZ, YZ or Y-Z. C-terminally processed by CTPA; processing is essential to allow assembly of the oxygen-evolving complex and thus photosynthetic growth.

The protein resides in the plastid. It localises to the chloroplast thylakoid membrane. It carries out the reaction 2 a plastoquinone + 4 hnu + 2 H2O = 2 a plastoquinol + O2. Its function is as follows. Photosystem II (PSII) is a light-driven water:plastoquinone oxidoreductase that uses light energy to abstract electrons from H(2)O, generating O(2) and a proton gradient subsequently used for ATP formation. It consists of a core antenna complex that captures photons, and an electron transfer chain that converts photonic excitation into a charge separation. The D1/D2 (PsbA/PsbD) reaction center heterodimer binds P680, the primary electron donor of PSII as well as several subsequent electron acceptors. The chain is Photosystem II protein D1 from Emiliania huxleyi (Coccolithophore).